We begin with the raw amino-acid sequence, 69 residues long: DNA-directed RNA polymerase subunit epsilon (69 aa).

Belongs to the RNA polymerase subunit epsilon family. As to quaternary structure, RNAP is composed of a core of 2 alpha, a beta and a beta' subunit. The core is associated with a delta subunit, and at least one of epsilon or omega. When a sigma factor is associated with the core the holoenzyme is formed, which can initiate transcription.

It catalyses the reaction RNA(n) + a ribonucleoside 5'-triphosphate = RNA(n+1) + diphosphate. Functionally, a non-essential component of RNA polymerase (RNAP). The sequence is that of DNA-directed RNA polymerase subunit epsilon from Bacillus velezensis (strain DSM 23117 / BGSC 10A6 / LMG 26770 / FZB42) (Bacillus amyloliquefaciens subsp. plantarum).